The sequence spans 207 residues: ATP synthase subunit b 2 (207 aa).

Positions 1–31 (MVAQAAPPAGTAGQGTHEAASAAHGAAAAHG) are enriched in low complexity. The interval 1–41 (MVAQAAPPAGTAGQGTHEAASAAHGAAAAHGAAEEGHGKKS) is disordered. Residues 48–70 (ATTFASQLLWLVLSFGLLYLLMS) traverse the membrane as a helical segment.

The protein belongs to the ATPase B chain family. F-type ATPases have 2 components, F(1) - the catalytic core - and F(0) - the membrane proton channel. F(1) has five subunits: alpha(3), beta(3), gamma(1), delta(1), epsilon(1). F(0) has three main subunits: a(1), b(2) and c(10-14). The alpha and beta chains form an alternating ring which encloses part of the gamma chain. F(1) is attached to F(0) by a central stalk formed by the gamma and epsilon chains, while a peripheral stalk is formed by the delta and b chains.

Its subcellular location is the cell inner membrane. Its function is as follows. F(1)F(0) ATP synthase produces ATP from ADP in the presence of a proton or sodium gradient. F-type ATPases consist of two structural domains, F(1) containing the extramembraneous catalytic core and F(0) containing the membrane proton channel, linked together by a central stalk and a peripheral stalk. During catalysis, ATP synthesis in the catalytic domain of F(1) is coupled via a rotary mechanism of the central stalk subunits to proton translocation. Functionally, component of the F(0) channel, it forms part of the peripheral stalk, linking F(1) to F(0). The polypeptide is ATP synthase subunit b 2 (Xanthobacter autotrophicus (strain ATCC BAA-1158 / Py2)).